Here is a 359-residue protein sequence, read N- to C-terminus: Palmitoyltransferase ERF2 (359 aa).

The disordered stretch occupies residues methionine 1–histidine 21. At methionine 1–proline 75 the chain is on the cytoplasmic side. A helical membrane pass occupies residues leucine 76–alanine 96. Residues histidine 97–asparagine 104 are Lumenal-facing. A helical transmembrane segment spans residues glycine 105 to isoleucine 125. The Cytoplasmic segment spans residues arginine 126 to phenylalanine 217. The 51-residue stretch at lysine 173 to leucine 223 folds into the DHHC domain. Cysteine 203 serves as the catalytic S-palmitoyl cysteine intermediate. The chain crosses the membrane as a helical span at residues phenylalanine 218–isoleucine 238. Over histidine 239–cysteine 250 the chain is Lumenal. The helical transmembrane segment at proline 251 to phenylalanine 271 threads the bilayer. At threonine 272–isoleucine 359 the chain is on the cytoplasmic side.

Belongs to the DHHC palmitoyltransferase family. ERF2/ZDHHC9 subfamily. In terms of assembly, interacts with SHR5. Autopalmitoylated.

The protein resides in the endoplasmic reticulum membrane. It catalyses the reaction L-cysteinyl-[protein] + hexadecanoyl-CoA = S-hexadecanoyl-L-cysteinyl-[protein] + CoA. Functionally, the ERF2-SHR5 complex is a palmitoyltransferase specific for Ras proteins. Palmitoylates RAS2, which is required for its proper plasma membrane localization. The sequence is that of Palmitoyltransferase ERF2 (ERF2) from Saccharomyces cerevisiae (strain ATCC 204508 / S288c) (Baker's yeast).